A 112-amino-acid chain; its full sequence is Prostatic steroid-binding protein C2 (112 aa).

The first 20 residues, 1–20, serve as a signal peptide directing secretion; sequence MRLSLCLLTILVVCCYEANG. Pyrrolidone carboxylic acid is present on glutamine 21.

It belongs to the secretoglobin family. Lipophilin subfamily. In terms of assembly, prostatein is composed of three different peptides called C1, C2 and C3. These form covalent C1:C3 (F) and C2:C3 (S) heterodimers whose noncovalent association forms tetrameric (C1:C3/C3:C2) prostatein molecules. Linked by three disulfide bonds to C3. In terms of processing, the N-terminus is blocked.

The protein resides in the secreted. Its function is as follows. Part of prostatein which is the major secretory glycoprotein of ventral prostate gland. In Rattus norvegicus (Rat), this protein is Prostatic steroid-binding protein C2 (Psbpc2).